We begin with the raw amino-acid sequence, 258 residues long: Isoprenyl transferase 2 (258 aa).

Aspartate 39 is a catalytic residue. Residue aspartate 39 participates in Mg(2+) binding. Substrate-binding positions include 40–43 (GNRR), tryptophan 44, arginine 52, histidine 57, and 85–87 (SND). Residue asparagine 88 is the Proton acceptor of the active site. Substrate contacts are provided by residues arginine 92, arginine 207, and 213–215 (RLS). Residue glutamate 226 participates in Mg(2+) binding.

It belongs to the UPP synthase family. Homodimer. Requires Mg(2+) as cofactor.

In terms of biological role, catalyzes the condensation of isopentenyl diphosphate (IPP) with allylic pyrophosphates generating different type of terpenoids. The sequence is that of Isoprenyl transferase 2 from Tropheryma whipplei (strain Twist) (Whipple's bacillus).